Here is a 37-residue protein sequence, read N- to C-terminus: Cytochrome b6-f complex subunit 5 (37 aa).

Residues serine 5–alanine 25 traverse the membrane as a helical segment.

It belongs to the PetG family. The 4 large subunits of the cytochrome b6-f complex are cytochrome b6, subunit IV (17 kDa polypeptide, PetD), cytochrome f and the Rieske protein, while the 4 small subunits are PetG, PetL, PetM and PetN. The complex functions as a dimer.

It is found in the plastid. The protein localises to the chloroplast thylakoid membrane. Functionally, component of the cytochrome b6-f complex, which mediates electron transfer between photosystem II (PSII) and photosystem I (PSI), cyclic electron flow around PSI, and state transitions. PetG is required for either the stability or assembly of the cytochrome b6-f complex. In Arabis hirsuta (Hairy rock-cress), this protein is Cytochrome b6-f complex subunit 5.